The primary structure comprises 187 residues: Elongation factor P (187 aa).

Belongs to the elongation factor P family.

The protein resides in the cytoplasm. The protein operates within protein biosynthesis; polypeptide chain elongation. Functionally, involved in peptide bond synthesis. Stimulates efficient translation and peptide-bond synthesis on native or reconstituted 70S ribosomes in vitro. Probably functions indirectly by altering the affinity of the ribosome for aminoacyl-tRNA, thus increasing their reactivity as acceptors for peptidyl transferase. This is Elongation factor P from Sphingopyxis alaskensis (strain DSM 13593 / LMG 18877 / RB2256) (Sphingomonas alaskensis).